The following is a 404-amino-acid chain: Argininosuccinate synthase (404 aa).

Residues 10–18 (AYSGGLDTS) and A37 each bind ATP. 2 residues coordinate L-citrulline: Y89 and S94. Residue G119 participates in ATP binding. Residues T121, N125, and D126 each contribute to the L-aspartate site. N125 is a binding site for L-citrulline. Positions 129, 178, 187, 263, and 275 each coordinate L-citrulline.

Belongs to the argininosuccinate synthase family. Type 1 subfamily. Homotetramer.

It localises to the cytoplasm. It carries out the reaction L-citrulline + L-aspartate + ATP = 2-(N(omega)-L-arginino)succinate + AMP + diphosphate + H(+). It participates in amino-acid biosynthesis; L-arginine biosynthesis; L-arginine from L-ornithine and carbamoyl phosphate: step 2/3. In Photobacterium profundum (strain SS9), this protein is Argininosuccinate synthase.